Here is a 79-residue protein sequence, read N- to C-terminus: Small ribosomal subunit protein bS18 (79 aa).

In terms of assembly, part of the 30S ribosomal subunit. Forms a tight heterodimer with protein bS6. Post-translationally, both N-terminus methionine truncation and retention have been observed for this protein. May be methylated up to 6 times, on undetermined residues.

Binds as a heterodimer with protein bS6 to the central domain of the 16S rRNA, where it helps stabilize the platform of the 30S subunit. The chain is Small ribosomal subunit protein bS18 from Rhodopseudomonas palustris (strain ATCC BAA-98 / CGA009).